Here is a 52-residue protein sequence, read N- to C-terminus: Movement protein TGBp3 (52 aa).

Residues 1–3 (MHE) lie on the Lumenal side of the membrane. A helical membrane pass occupies residues 4 to 21 (SHLVVILALLLLALWCLS). The Cytoplasmic segment spans residues 22–52 (TRPVQPSCHVEINGHSIIVTGNCWHSTQRPH).

Belongs to the Tymovirales TGBp3 protein family.

It is found in the host endoplasmic reticulum membrane. Its function is as follows. Plays a role in viral cell-to-cell propagation, by facilitating genome transport to neighboring plant cells through plasmosdesmata. May induce the formation of granular vesicles derived from the Endoplasmic reticulum, which align on actin filaments. The protein is Movement protein TGBp3 of Foxtail mosaic virus.